Consider the following 85-residue polypeptide: Small ribosomal subunit protein uS17 (85 aa).

Belongs to the universal ribosomal protein uS17 family. In terms of assembly, part of the 30S ribosomal subunit.

Functionally, one of the primary rRNA binding proteins, it binds specifically to the 5'-end of 16S ribosomal RNA. The polypeptide is Small ribosomal subunit protein uS17 (Mycoplasma pneumoniae (strain ATCC 29342 / M129 / Subtype 1) (Mycoplasmoides pneumoniae)).